We begin with the raw amino-acid sequence, 204 residues long: Protein C (204 aa).

The segment at 1–78 (MPSFLRGILK…TEQSQRRPKI (78 aa)) is disordered. Residues 10–20 (KPKERHHENKN) are compositionally biased toward basic and acidic residues. A compositionally biased stretch (low complexity) spans 25–34 (SSDSLTSSYP).

The protein belongs to the respirovirus protein C family.

In Homo sapiens (Human), this protein is Protein C (P/V/C).